We begin with the raw amino-acid sequence, 193 residues long: Protein SINE3 (193 aa).

Residues Ser15–Glu35 are disordered. Positions Gly18–Glu35 are enriched in basic and acidic residues. The region spanning Val155 to Thr193 is the KASH domain. The helical transmembrane segment at Ile161 to Ser181 threads the bilayer. Positions Pro190–Thr193 match the Required for nuclear localization motif.

In terms of assembly, interacts with SUN1 and SUN2.

It localises to the nucleus membrane. This chain is Protein SINE3, found in Arabidopsis thaliana (Mouse-ear cress).